Consider the following 239-residue polypeptide: Uridylate kinase (239 aa).

Residue 10-13 participates in ATP binding; sequence KLSG. Residue glycine 52 coordinates UMP. Glycine 53 and arginine 57 together coordinate ATP. UMP contacts are provided by residues aspartate 72 and 133-140; that span reads TGNPFFTT. ATP is bound by residues threonine 160, tyrosine 166, and aspartate 169.

Belongs to the UMP kinase family. As to quaternary structure, homohexamer.

The protein localises to the cytoplasm. It carries out the reaction UMP + ATP = UDP + ADP. It participates in pyrimidine metabolism; CTP biosynthesis via de novo pathway; UDP from UMP (UMPK route): step 1/1. Inhibited by UTP. Catalyzes the reversible phosphorylation of UMP to UDP. This chain is Uridylate kinase, found in Porphyromonas gingivalis (strain ATCC BAA-308 / W83).